The primary structure comprises 384 residues: Putative glutamate--cysteine ligase 2 (384 aa).

It belongs to the glutamate--cysteine ligase type 2 family. YbdK subfamily.

It catalyses the reaction L-cysteine + L-glutamate + ATP = gamma-L-glutamyl-L-cysteine + ADP + phosphate + H(+). Its function is as follows. ATP-dependent carboxylate-amine ligase which exhibits weak glutamate--cysteine ligase activity. The protein is Putative glutamate--cysteine ligase 2 of Dechloromonas aromatica (strain RCB).